A 67-amino-acid chain; its full sequence is Sec-independent protein translocase protein TatA (67 aa).

Residues 1–21 traverse the membrane as a helical segment; that stretch reads MGSFSLTHWIIVLIIVVLIFG. The segment at 43–67 is disordered; sequence LNEGTDGKEAQKDDVIEHKKDEDKA. A compositionally biased stretch (basic and acidic residues) spans 47 to 67; that stretch reads TDGKEAQKDDVIEHKKDEDKA.

This sequence belongs to the TatA/E family. As to quaternary structure, the Tat system comprises two distinct complexes: a TatABC complex, containing multiple copies of TatA, TatB and TatC subunits, and a separate TatA complex, containing only TatA subunits. Substrates initially bind to the TatABC complex, which probably triggers association of the separate TatA complex to form the active translocon.

It localises to the cell inner membrane. In terms of biological role, part of the twin-arginine translocation (Tat) system that transports large folded proteins containing a characteristic twin-arginine motif in their signal peptide across membranes. TatA could form the protein-conducting channel of the Tat system. This Neisseria gonorrhoeae (strain ATCC 700825 / FA 1090) protein is Sec-independent protein translocase protein TatA.